A 105-amino-acid chain; its full sequence is Nucleoid-associated protein ABC0038 (105 aa).

Residues 1 to 22 show a composition bias toward low complexity; that stretch reads MEMKNMGNMMKQMQKMQKQMMK. Positions 1 to 26 are disordered; that stretch reads MEMKNMGNMMKQMQKMQKQMMKAQEE.

This sequence belongs to the YbaB/EbfC family. Homodimer.

The protein resides in the cytoplasm. The protein localises to the nucleoid. In terms of biological role, binds to DNA and alters its conformation. May be involved in regulation of gene expression, nucleoid organization and DNA protection. The polypeptide is Nucleoid-associated protein ABC0038 (Shouchella clausii (strain KSM-K16) (Alkalihalobacillus clausii)).